The sequence spans 148 residues: MIIIIKNCDKPLLNFKEMEMQTKCDLELRLLTSSYDSDFHSSLDESSSSEISQPKQESQILTIFYNGHMCVSSDLTHLEANAILSLASRDVEEKSLSLRSSDGSDPPTIPNNSTRFHYQKASMKRSLHSFLQKRSLRIQATSPYHRYR.

The 36-residue stretch at 54 to 89 (PKQESQILTIFYNGHMCVSSDLTHLEANAILSLASR) folds into the Tify domain.

Belongs to the TIFY/JAZ family. Ubiquitinated. Targeted for degradation by the SCF(COI1) E3 ubiquitin ligase-proteasome pathway during jasmonate signaling.

It is found in the nucleus. Its function is as follows. Repressor of jasmonate responses. The polypeptide is Protein TIFY 5B (TIFY 5B) (Arabidopsis thaliana (Mouse-ear cress)).